The sequence spans 574 residues: Acetolactate synthase large subunit (574 aa).

Glutamate 51 contributes to the thiamine diphosphate binding site. Residues arginine 153, 261–282 (HGTY…IGVR), and 304–323 (DIDP…IVGN) contribute to the FAD site. A thiamine pyrophosphate binding region spans residues 397–477 (QHQMFAALYY…ILILNLNNKS (81 aa)). The Mg(2+) site is built by aspartate 448 and asparagine 475.

Belongs to the TPP enzyme family. Dimer of large and small chains. Mg(2+) is required as a cofactor. Requires thiamine diphosphate as cofactor.

It catalyses the reaction 2 pyruvate + H(+) = (2S)-2-acetolactate + CO2. Its pathway is amino-acid biosynthesis; L-isoleucine biosynthesis; L-isoleucine from 2-oxobutanoate: step 1/4. It functions in the pathway amino-acid biosynthesis; L-valine biosynthesis; L-valine from pyruvate: step 1/4. In Buchnera aphidicola subsp. Schlechtendalia chinensis, this protein is Acetolactate synthase large subunit (ilvI).